Reading from the N-terminus, the 265-residue chain is Undecaprenyl-diphosphatase (265 aa).

Helical transmembrane passes span 1-21 (MDWL…FLPI), 40-60 (GLAF…LAFH), 87-107 (WAVI…ENVI), 113-133 (ASLV…WADV), 151-173 (IIGF…TITA), 188-208 (SFLL…VELI), 214-234 (VAWG…WLCI), and 244-264 (IGML…LVWV).

This sequence belongs to the UppP family.

The protein localises to the cell inner membrane. The enzyme catalyses di-trans,octa-cis-undecaprenyl diphosphate + H2O = di-trans,octa-cis-undecaprenyl phosphate + phosphate + H(+). Functionally, catalyzes the dephosphorylation of undecaprenyl diphosphate (UPP). Confers resistance to bacitracin. This is Undecaprenyl-diphosphatase from Chromohalobacter salexigens (strain ATCC BAA-138 / DSM 3043 / CIP 106854 / NCIMB 13768 / 1H11).